The sequence spans 331 residues: Tetraacyldisaccharide 4'-kinase (331 aa).

Position 59–66 (59–66 (FVGGTGKT)) interacts with ATP.

The protein belongs to the LpxK family.

The enzyme catalyses a lipid A disaccharide + ATP = a lipid IVA + ADP + H(+). It participates in glycolipid biosynthesis; lipid IV(A) biosynthesis; lipid IV(A) from (3R)-3-hydroxytetradecanoyl-[acyl-carrier-protein] and UDP-N-acetyl-alpha-D-glucosamine: step 6/6. Its function is as follows. Transfers the gamma-phosphate of ATP to the 4'-position of a tetraacyldisaccharide 1-phosphate intermediate (termed DS-1-P) to form tetraacyldisaccharide 1,4'-bis-phosphate (lipid IVA). This is Tetraacyldisaccharide 4'-kinase from Alkalilimnicola ehrlichii (strain ATCC BAA-1101 / DSM 17681 / MLHE-1).